The following is a 304-amino-acid chain: Galactose 1-dehydrogenase (304 aa).

Belongs to the Gfo/Idh/MocA family. As to quaternary structure, homodimer.

The protein resides in the cytoplasm. It carries out the reaction D-galactose + NAD(+) = D-galactono-1,4-lactone + NADH + H(+). The protein operates within carbohydrate metabolism; galactose metabolism. Functionally, catalyzes the dehydrogenation of D-galactose by either NAD(+) or NADP(+). Oxidizes following sugars in decreasing order: D-fucose &gt; D-galactose &gt; L-arabinose &gt; 2-deoxy-D-galactose &gt;&gt; 4-deoxy-D-galactose &gt; 2-deoxy-2-amino-D-galactose. In Pseudomonas fluorescens, this protein is Galactose 1-dehydrogenase (gal).